Reading from the N-terminus, the 330-residue chain is ADP-L-glycero-D-manno-heptose-6-epimerase (330 aa).

Residues 11–12, 32–33, K39, K54, 75–79, and N92 contribute to the NADP(+) site; these read FI, DN, and EGACS. The Proton acceptor role is filled by Y139. K143 provides a ligand contact to NADP(+). N168 provides a ligand contact to substrate. NADP(+) is bound by residues V169 and K177. Catalysis depends on K177, which acts as the Proton acceptor. Substrate contacts are provided by residues R179, H186, 200–203, R213, and Y292; that span reads FGEY.

This sequence belongs to the NAD(P)-dependent epimerase/dehydratase family. HldD subfamily. Homopentamer. The cofactor is NADP(+).

The catalysed reaction is ADP-D-glycero-beta-D-manno-heptose = ADP-L-glycero-beta-D-manno-heptose. Its pathway is nucleotide-sugar biosynthesis; ADP-L-glycero-beta-D-manno-heptose biosynthesis; ADP-L-glycero-beta-D-manno-heptose from D-glycero-beta-D-manno-heptose 7-phosphate: step 4/4. In terms of biological role, catalyzes the interconversion between ADP-D-glycero-beta-D-manno-heptose and ADP-L-glycero-beta-D-manno-heptose via an epimerization at carbon 6 of the heptose. In Paraburkholderia xenovorans (strain LB400), this protein is ADP-L-glycero-D-manno-heptose-6-epimerase.